The primary structure comprises 437 residues: Elongation factor 1-gamma (437 aa).

The residue at position 2 (Ala2) is an N-acetylalanine. Positions Ala2–Ser87 constitute a GST N-terminal domain. The region spanning Thr88–Phe216 is the GST C-terminal domain. Residues Lys147 and Lys212 each carry the N6-acetyllysine modification. The segment covering Phe221 to Ala254 has biased composition (basic and acidic residues). The disordered stretch occupies residues Phe221 to Gln268. Lys253 is covalently cross-linked (Glycyl lysine isopeptide (Lys-Gly) (interchain with G-Cter in SUMO1)). One can recognise an EF-1-gamma C-terminal domain in the interval Ala276–Lys437. A Glycyl lysine isopeptide (Lys-Gly) (interchain with G-Cter in SUMO2) cross-link involves residue Lys285. Lys401 is subject to N6-acetyllysine. Lys434 is modified (N6-acetyllysine; alternate). Lys434 bears the N6-malonyllysine; alternate mark.

As to quaternary structure, EF-1 is composed of four subunits: alpha, beta, delta, and gamma.

In terms of biological role, probably plays a role in anchoring the complex to other cellular components. The polypeptide is Elongation factor 1-gamma (EEF1G) (Equus caballus (Horse)).